Here is a 472-residue protein sequence, read N- to C-terminus: Protein c-ets-2-A (472 aa).

The PNT domain occupies 85–170 (NTFNGFAKKR…EHLEEMMKEH (86 aa)). Positions 366 to 446 (IQLWQFLLEL…SGKRYVYRFV (81 aa)) form a DNA-binding region, ETS.

It belongs to the ETS family.

The protein resides in the nucleus. In terms of biological role, probable transcription factor. The chain is Protein c-ets-2-A (ets2-a) from Xenopus laevis (African clawed frog).